Consider the following 322-residue polypeptide: MAALVAAAALAAAEPPPAVPAAAGSGGPTSRRDFYWLRSFLAGSIAGCCAKTTVAPLDRVKVLLQAHNHHYKHLGVLSPLRAVPQKEGYLGLYKGNGAMMIRIFPYGAIQFMAFEHYKTFITTKLGVSGHVHRLMAGSMAGKMSMTAVICTYPLDVVRVRLAFQVKGEHTYSGIIHAFKTIYAKEGGFLGFYRGLMPTILGMAPYASVSFFTFGTLKSVGLSYAPTLLGRPSSDNPNVLVLKTHINLLCGGVARAIAQTISYPFDVTRRRMQLGAVLPEFEKCLTMRETMKYVYGHHGIRRGLYRGLSLNYIRCIPSQAVAF.

Solcar repeat units follow at residues 34 to 120 (FYWL…YKTF), 128 to 219 (SGHV…LKSV), and 241 to 322 (LKTH…AVAF).

This sequence belongs to the mitochondrial carrier (TC 2.A.29) family.

It localises to the mitochondrion inner membrane. Functionally, may be involved in the transport of coenzyme A in the mitochondrial matrix. Very little is known about the physiological function of this carrier. The sequence is that of Solute carrier family 25 member 16 from Rattus norvegicus (Rat).